We begin with the raw amino-acid sequence, 597 residues long: Protein kinase C-like 3 (597 aa).

The PB1 domain maps to 12–95 (DIKLKTRFHG…AELNIHVFVG (84 aa)). The segment at 127–177 (GHRFQGKRLNRRIQCFICHDYIWGIGRQGFRCVDCRLCVHKKCHRHVRTHC) adopts a Phorbol-ester/DAG-type zinc-finger fold. The segment at 181–238 (PQGPNVPVAPSSGVGSLRGGRLDTSSSTTRSGGGIDNGAFHEHEIESPGSAKDMSRST) is disordered. The region spanning 253–522 (FRLLTVIGRG…LNDMKEHDFF (270 aa)) is the Protein kinase domain. Residues 259–267 (IGRGSYAKV) and lysine 282 each bind ATP. Aspartate 377 acts as the Proton acceptor in catalysis. Residues 524-595 (GFIDWEALEQ…VNPLQMSRED (72 aa)) enclose the AGC-kinase C-terminal domain.

Belongs to the protein kinase superfamily. AGC Ser/Thr protein kinase family. PKC subfamily. As to quaternary structure, interaction with par-3 required for the peripheral localization of par-6 and to form a par-3/par-6/pkc-3 complex, which is activated when cdc-42 interacts with par-6. Binds avidly to the phosphotyrosine interaction domain (PID) of a novel pkc-3 adapter protein num-1, which enables tethering and targeting of pkc-3 to the cell periphery. Mg(2+) serves as cofactor.

It localises to the cytoplasm. Its subcellular location is the cytoskeleton. It catalyses the reaction L-seryl-[protein] + ATP = O-phospho-L-seryl-[protein] + ADP + H(+). The enzyme catalyses L-threonyl-[protein] + ATP = O-phospho-L-threonyl-[protein] + ADP + H(+). Its function is as follows. Required for the normal progression of embryogenesis and viability of the organism. Plays an indispensable role in establishing embryonic polarity and in recruiting and maintaining par-6 to the periphery, through interaction with par-3. Required for epithelial cell polarity in the distal spermatheca. Phosphorylates serine residues of num-1. Required for the expression of antimicrobial peptide nlp-29 in response in response to fungal infection or physical injury. This chain is Protein kinase C-like 3, found in Caenorhabditis briggsae.